The chain runs to 471 residues: Putative ETHYLENE INSENSITIVE 3-like 4 protein (471 aa).

The segment at 280-316 (DLKISEDQDDQESSGSKRKSESMEPSKSVYTCQNSSC) is disordered. The span at 304–316 (PSKSVYTCQNSSC) shows a compositional bias: polar residues.

Belongs to the EIN3 family.

The protein resides in the nucleus. Its function is as follows. Putative transcription factor that may be involved in the ethylene response pathway. This is Putative ETHYLENE INSENSITIVE 3-like 4 protein (EIL4) from Arabidopsis thaliana (Mouse-ear cress).